We begin with the raw amino-acid sequence, 562 residues long: Actin-related protein 8 (562 aa).

248–251 (DVGD) contributes to the ATP binding site.

The protein belongs to the actin family. ARP8 subfamily. In terms of assembly, component of the chromatin remodeling Ino80 complex. Exists as monomers and dimers, but the dimer is most probably the biologically relevant form required for stable interactions with histones that exploits the twofold symmetry of the nucleosome core.

It localises to the nucleus. In terms of biological role, plays an important role in the functional organization of mitotic chromosomes. Exhibits low basal ATPase activity, and unable to polymerize. Its function is as follows. Proposed core component of the chromatin remodeling INO80 complex which is involved in transcriptional regulation, DNA replication and probably DNA repair. Strongly prefer nucleosomes and H3-H4 tetramers over H2A-H2B dimers, suggesting it may act as a nucleosome recognition module within the complex. In Aedes aegypti (Yellowfever mosquito), this protein is Actin-related protein 8.